The chain runs to 303 residues: Oxygen-dependent coproporphyrinogen-III oxidase (303 aa).

Ser-93 is a binding site for substrate. Positions 97 and 107 each coordinate a divalent metal cation. The active-site Proton donor is His-107. 109–111 (NVR) contributes to the substrate binding site. Positions 149 and 179 each coordinate a divalent metal cation. Residues 244 to 279 (YVEFNLVFDRGTLFGLQSGGRTESILLSMPPLAQWR) form an important for dimerization region. Substrate is bound at residue 262–264 (GGR).

The protein belongs to the aerobic coproporphyrinogen-III oxidase family. Homodimer. A divalent metal cation serves as cofactor.

The protein resides in the cytoplasm. The catalysed reaction is coproporphyrinogen III + O2 + 2 H(+) = protoporphyrinogen IX + 2 CO2 + 2 H2O. The protein operates within porphyrin-containing compound metabolism; protoporphyrin-IX biosynthesis; protoporphyrinogen-IX from coproporphyrinogen-III (O2 route): step 1/1. In terms of biological role, involved in the heme biosynthesis. Catalyzes the aerobic oxidative decarboxylation of propionate groups of rings A and B of coproporphyrinogen-III to yield the vinyl groups in protoporphyrinogen-IX. In Bordetella pertussis (strain Tohama I / ATCC BAA-589 / NCTC 13251), this protein is Oxygen-dependent coproporphyrinogen-III oxidase.